A 303-amino-acid chain; its full sequence is Nucleotide-binding protein Dvul_1502 (303 aa).

23 to 30 (GLSGAGKS) contributes to the ATP binding site. 75-78 (DLRE) serves as a coordination point for GTP.

It belongs to the RapZ-like family.

Displays ATPase and GTPase activities. In Nitratidesulfovibrio vulgaris (strain DP4) (Desulfovibrio vulgaris), this protein is Nucleotide-binding protein Dvul_1502.